Reading from the N-terminus, the 227-residue chain is Putative ankyrin repeat protein RF_0314 (227 aa).

3 ANK repeats span residues 94–126, 130–164, and 168–199; these read NGCTFLHYSVEDVKVLYDNIPQFLLEKGADPNI, DGNTPLHILINRDFFSSKEIYVAKLLIQYGADIEL, and LGWTPIQCFIQAGNIKLKALLQLVKACKDNDF.

The polypeptide is Putative ankyrin repeat protein RF_0314 (Rickettsia felis (strain ATCC VR-1525 / URRWXCal2) (Rickettsia azadi)).